The following is a 217-amino-acid chain: Large ribosomal subunit protein uL4 (217 aa).

Residues arginine 42–glutamine 100 form a disordered region.

It belongs to the universal ribosomal protein uL4 family. Part of the 50S ribosomal subunit.

Its function is as follows. One of the primary rRNA binding proteins, this protein initially binds near the 5'-end of the 23S rRNA. It is important during the early stages of 50S assembly. It makes multiple contacts with different domains of the 23S rRNA in the assembled 50S subunit and ribosome. In terms of biological role, forms part of the polypeptide exit tunnel. In Mycobacterium avium (strain 104), this protein is Large ribosomal subunit protein uL4.